Reading from the N-terminus, the 3166-residue chain is Intermembrane lipid transfer protein VPS13A (3166 aa).

The Chorein N-terminal domain occupies 3–116 (FESVVVEVLN…LMETKQQELK (114 aa)). TPR repeat units lie at residues 212-245 (LFAYWNVNSEMFYLNDYDESLKALKNGIVNENIV) and 373-406 (LTSKKPSPEILMSLEELEKTLDVFNITIARQQAE). At threonine 831 the chain carries Phosphothreonine. At serine 835 the chain carries Phosphoserine. The FFAT motif lies at 838–844 (EFFDAPC). The segment covering 1343–1359 (APSSANKDPETMTSGVT) has biased composition (polar residues). The tract at residues 1343–1365 (APSSANKDPETMTSGVTSPPDHS) is disordered. Serine 1410 carries the post-translational modification Phosphoserine. 2 TPR repeats span residues 1806-1840 (AIVESDSEAENYKVPEYKTAISFYSRDQLNITLSK) and 1999-2034 (ISVFEGDTLLGIASPENEFNIPLASYRSSLSLVPED). The 246-residue stretch at 2202 to 2447 (VAFHSPYWMV…VYYTWADPVG (246 aa)) folds into the SHR-BD domain. Required for mitochondrial localization regions lie at residues 2607–3166 (LQPH…SPRL) and 2743–3166 (EYEV…SPRL). TPR repeat units follow at residues 2716 to 2750 (ADLVTKAEVTEKTEVEHFHKDVEAFEQEYEVVSSV) and 2852 to 2890 (ILGLDVLGNPFGLIREFSEGVEAFFYEPYQGAIQGPEEF). Residues 2945–3019 (PAGLREGITR…SSTFQGIKRA (75 aa)) form a required for lipid droplet localization region.

It belongs to the VPS13 family. Interacts (via FFAT motif) with VAPA and VAPB. Interacts with RAB7A. Interacts with XK.

It localises to the mitochondrion outer membrane. The protein resides in the endoplasmic reticulum membrane. Its subcellular location is the endosome membrane. It is found in the lysosome membrane. The protein localises to the lipid droplet. It localises to the golgi apparatus. The protein resides in the cytoplasmic vesicle. Its subcellular location is the secretory vesicle. It is found in the neuronal dense core vesicle. Its function is as follows. Mediates the transfer of lipids between membranes at organelle contact sites. Required for the formation or stabilization of ER-mitochondria contact sites which enable transfer of lipids between the ER and mitochondria. Negatively regulates lipid droplet size and motility. Required for efficient lysosomal protein degradation. This Mus musculus (Mouse) protein is Intermembrane lipid transfer protein VPS13A.